Reading from the N-terminus, the 151-residue chain is Chemokine-like factor (151 aa).

The region spanning 13 to 133 (FCLSLKCFVK…DCALMCQKLR (121 aa)) is the MARVEL domain. Transmembrane regions (helical) follow at residues 19-39 (CFVKTLRLVVTVASMIFFIVA), 45-65 (YIVITGFEVTIILFLIALYMC), 74-94 (FFWPLLDVINSVVTTLFMLIV), and 107-127 (IMVGGVFGFLTVICTVADCAL). Asn-142 carries an N-linked (GlcNAc...) asparagine glycan.

It belongs to the chemokine-like factor family. In terms of tissue distribution, both isoforms have highest expression levels in testis with relatively lower expression level in liver, spleen, lung, brain and heart and barely detectable levels in skeletal muscle and kidney were barely detected. In most tissues, isoform CKLF2 has higher expression levels than isoform CKLF1.

Its subcellular location is the secreted. It localises to the membrane. Functionally, may play an important role in inflammation and regeneration of skeletal muscle. Essential for embryonic development. Has chemotactic response in monocytes, neutrophils and lymphocytes. Binds CCR4. The protein is Chemokine-like factor (Cklf) of Rattus norvegicus (Rat).